A 161-amino-acid polypeptide reads, in one-letter code: Probable ubiquitin-conjugating enzyme E2 17 (161 aa).

A UBC core domain is found at 15–161 (IATNRLQKEF…TRWRFHDDKV (147 aa)). C99 functions as the Glycyl thioester intermediate in the catalytic mechanism.

The protein belongs to the ubiquitin-conjugating enzyme family.

It carries out the reaction S-ubiquitinyl-[E1 ubiquitin-activating enzyme]-L-cysteine + [E2 ubiquitin-conjugating enzyme]-L-cysteine = [E1 ubiquitin-activating enzyme]-L-cysteine + S-ubiquitinyl-[E2 ubiquitin-conjugating enzyme]-L-cysteine.. Its pathway is protein modification; protein ubiquitination. In terms of biological role, accepts the ubiquitin from the E1 complex and catalyzes its covalent attachment to other proteins. The polypeptide is Probable ubiquitin-conjugating enzyme E2 17 (UBC17) (Arabidopsis thaliana (Mouse-ear cress)).